The sequence spans 20 residues: Fibrinogen beta chain (20 aa).

The residue at position 5 (Y5) is a Sulfotyrosine.

In terms of assembly, heterohexamer; disulfide linked. Contains 2 sets of 3 non-identical chains (alpha, beta and gamma). The 2 heterotrimers are in head to head conformation with the N-termini in a small central domain. In terms of processing, conversion of fibrinogen to fibrin is triggered by thrombin, which cleaves fibrinopeptides A and B from alpha and beta chains, and thus exposes the N-terminal polymerization sites responsible for the formation of the soft clot.

The protein localises to the secreted. In terms of biological role, cleaved by the protease thrombin to yield monomers which, together with fibrinogen alpha (FGA) and fibrinogen gamma (FGG), polymerize to form an insoluble fibrin matrix. Fibrin has a major function in hemostasis as one of the primary components of blood clots. In addition, functions during the early stages of wound repair to stabilize the lesion and guide cell migration during re-epithelialization. Was originally thought to be essential for platelet aggregation, based on in vitro studies using anticoagulated blood. However subsequent studies have shown that it is not absolutely required for thrombus formation in vivo. Enhances expression of SELP in activated platelets. Maternal fibrinogen is essential for successful pregnancy. Fibrin deposition is also associated with infection, where it protects against IFNG-mediated hemorrhage. May also facilitate the antibacterial immune response via both innate and T-cell mediated pathways. The polypeptide is Fibrinogen beta chain (FGB) (Capra hircus (Goat)).